Reading from the N-terminus, the 254-residue chain is Probable protein ABIL5 (254 aa).

The segment at 1 to 26 (MEVAEAGVDGVAGRRQQEEASGAAPF) is disordered.

It belongs to the ABI family. In terms of assembly, binds SCAR.

It is found in the cytoplasm. It localises to the cytoskeleton. Involved in regulation of actin and microtubule organization. Part of a WAVE complex that activates the Arp2/3 complex. The chain is Probable protein ABIL5 from Oryza sativa subsp. japonica (Rice).